The following is a 92-amino-acid chain: Small ribosomal subunit protein uS19 (92 aa).

Belongs to the universal ribosomal protein uS19 family.

Its function is as follows. Protein S19 forms a complex with S13 that binds strongly to the 16S ribosomal RNA. This chain is Small ribosomal subunit protein uS19, found in Picosynechococcus sp. (strain ATCC 27264 / PCC 7002 / PR-6) (Agmenellum quadruplicatum).